We begin with the raw amino-acid sequence, 280 residues long: Dolichyl-diphosphooligosaccharide--protein glycosyltransferase subunit 2 (280 aa).

The first 16 residues, methionine 1–alanine 16, serve as a signal peptide directing secretion. Over alanine 17–alanine 187 the chain is Lumenal. A helical transmembrane segment spans residues leucine 188–tryptophan 208. Over serine 209–proline 222 the chain is Cytoplasmic. A helical transmembrane segment spans residues tryptophan 223 to valine 243. Residue glutamine 244 is a topological domain, lumenal. Residues phenylalanine 245–glycine 265 form a helical membrane-spanning segment. At asparagine 266–glutamate 280 the chain is on the cytoplasmic side.

This sequence belongs to the SWP1 family. In terms of assembly, component of the oligosaccharyltransferase (OST) complex.

The protein localises to the endoplasmic reticulum membrane. It functions in the pathway protein modification; protein glycosylation. Subunit of the oligosaccharyl transferase (OST) complex that catalyzes the initial transfer of a defined glycan (Glc(3)Man(9)GlcNAc(2) in eukaryotes) from the lipid carrier dolichol-pyrophosphate to an asparagine residue within an Asn-X-Ser/Thr consensus motif in nascent polypeptide chains, the first step in protein N-glycosylation. N-glycosylation occurs cotranslationally and the complex associates with the Sec61 complex at the channel-forming translocon complex that mediates protein translocation across the endoplasmic reticulum (ER). All subunits are required for a maximal enzyme activity. The sequence is that of Dolichyl-diphosphooligosaccharide--protein glycosyltransferase subunit 2 from Caenorhabditis elegans.